A 466-amino-acid polypeptide reads, in one-letter code: Ribulose bisphosphate carboxylase large chain (466 aa).

An N6,N6,N6-trimethyllysine modification is found at Lys-5. 2 residues coordinate substrate: Asn-114 and Thr-164. Lys-166 acts as the Proton acceptor in catalysis. Lys-168 provides a ligand contact to substrate. Mg(2+)-binding residues include Lys-192, Asp-194, and Glu-195. Lys-192 is modified (N6-carboxylysine). The Proton acceptor role is filled by His-285. Substrate-binding residues include Arg-286, His-318, and Ser-370.

This sequence belongs to the RuBisCO large chain family. Type I subfamily. Heterohexadecamer of 8 large chains and 8 small chains. The cofactor is Mg(2+).

The protein localises to the plastid. The protein resides in the chloroplast. The catalysed reaction is 2 (2R)-3-phosphoglycerate + 2 H(+) = D-ribulose 1,5-bisphosphate + CO2 + H2O. The enzyme catalyses D-ribulose 1,5-bisphosphate + O2 = 2-phosphoglycolate + (2R)-3-phosphoglycerate + 2 H(+). Functionally, ruBisCO catalyzes two reactions: the carboxylation of D-ribulose 1,5-bisphosphate, the primary event in carbon dioxide fixation, as well as the oxidative fragmentation of the pentose substrate in the photorespiration process. Both reactions occur simultaneously and in competition at the same active site. The chain is Ribulose bisphosphate carboxylase large chain from Cornus kousa (Kousa dogwood).